We begin with the raw amino-acid sequence, 79 residues long: Defensin-like protein 109 (79 aa).

The signal sequence occupies residues 1 to 24 (MDFTKKILVVFAFTIMLGISSVHC). Intrachain disulfides connect Cys41/Cys76, Cys47/Cys68, Cys54/Cys74, and Cys58/Cys75.

The protein belongs to the DEFL family.

It is found in the secreted. The protein is Defensin-like protein 109 of Arabidopsis thaliana (Mouse-ear cress).